The primary structure comprises 186 residues: Large ribosomal subunit protein uL22 (186 aa).

Residues 159–186 (KATDEEPTKKKLSKKKLQRQKEKMMRSE) are disordered. A compositionally biased stretch (basic and acidic residues) spans 177 to 186 (RQKEKMMRSE).

This sequence belongs to the universal ribosomal protein uL22 family.

This is Large ribosomal subunit protein uL22 (RpL17) from Phlebotomus papatasi (Sandfly).